A 145-amino-acid chain; its full sequence is D-aminoacyl-tRNA deacylase (145 aa).

The Gly-cisPro motif, important for rejection of L-amino acids motif lies at Gly-137 to Pro-138.

It belongs to the DTD family. Homodimer.

The protein localises to the cytoplasm. The catalysed reaction is glycyl-tRNA(Ala) + H2O = tRNA(Ala) + glycine + H(+). It carries out the reaction a D-aminoacyl-tRNA + H2O = a tRNA + a D-alpha-amino acid + H(+). Functionally, an aminoacyl-tRNA editing enzyme that deacylates mischarged D-aminoacyl-tRNAs. Also deacylates mischarged glycyl-tRNA(Ala), protecting cells against glycine mischarging by AlaRS. Acts via tRNA-based rather than protein-based catalysis; rejects L-amino acids rather than detecting D-amino acids in the active site. By recycling D-aminoacyl-tRNA to D-amino acids and free tRNA molecules, this enzyme counteracts the toxicity associated with the formation of D-aminoacyl-tRNA entities in vivo and helps enforce protein L-homochirality. The polypeptide is D-aminoacyl-tRNA deacylase (Colwellia psychrerythraea (strain 34H / ATCC BAA-681) (Vibrio psychroerythus)).